Reading from the N-terminus, the 364-residue chain is Tripartite motif-containing protein 54 (364 aa).

The segment at 26–82 adopts an RING-type zinc-finger fold; sequence CPICLEMFSKPVVILPCQHNLCRKCANDVFQASNPLWQSRGSTTVSSGGRFRCPSCR. The B box-type zinc finger occupies 121 to 163; sequence EQHLMCEEHEDEKINIYCLSCEVPTCSLCKVFGAHKDCEVAPL. C126, H129, C149, and H155 together coordinate Zn(2+). The segment at 168-211 is mediates microtubule-binding and homooligomerization; the sequence is KRQKSELSDGIAMLVAGNDRVQAVITQMEEVCQTIEDNSRRQKQ. The stretch at 194-252 forms a coiled coil; sequence QMEEVCQTIEDNSRRQKQLLNQKFETLCAVLEERKGELLQALARVQEEKLQRVRSLIRQ. The 59-residue stretch at 271–329 folds into the COS domain; it reads MEEPQMALYLQQAKELINKVGAMSKVELAGRPEPGYESMEQFSVIVEHVAEMLRTIDFQ. Positions 328–364 are disordered; the sequence is FQPGASGDEEDDEVTLDGEEGNTGLEEERLDGPEGLH. Residues 334-347 show a composition bias toward acidic residues; it reads GDEEDDEVTLDGEE. Positions 353 to 364 are enriched in basic and acidic residues; the sequence is EEERLDGPEGLH.

In terms of assembly, homooligomer and heterooligomer. Interacts with TRIM63 and probably with TRIM55. Interacts with tubulin.

The protein resides in the cytoplasm. It localises to the cytoskeleton. Its subcellular location is the myofibril. The protein localises to the sarcomere. It is found in the z line. Its function is as follows. May bind and stabilize microtubules during myotubes formation. The protein is Tripartite motif-containing protein 54 (Trim54) of Rattus norvegicus (Rat).